The following is a 456-amino-acid chain: MFS-type transporter ppzB (456 aa).

The next 5 helical transmembrane spans lie at 1–21 (MGLF…PFIM), 38–58 (GFLA…GWAA), 72–92 (VFLF…LLVV), 125–145 (IGTI…LGGV), and 154–174 (AVFA…GLVI). The disordered stretch occupies residues 206–225 (EAQERTHEGTPLLPQDDDDD). 6 helical membrane-spanning segments follow: residues 255–275 (LAML…ATVP), 284–304 (FSSL…FALG), 318–338 (AAAT…GLPE), 348–368 (VALF…VTSP), 398–418 (FGFS…LGGV), and 427–447 (VMGA…FLFV).

Belongs to the major facilitator superfamily. TCR/Tet family.

The protein resides in the membrane. In terms of biological role, MFS-type transporter; part of the gene cluster that mediates the biosynthesis of pyrrolopyrazines, secondary metabolites showing insecticidal activity. Probably involved in the secretion of peramine and other pyrrolopyrazines. This is MFS-type transporter ppzB (ppzB) from Metarhizium majus (strain ARSEF 297).